A 180-amino-acid chain; its full sequence is UPF0340 protein llmg_0465 (180 aa).

Belongs to the UPF0340 family.

The sequence is that of UPF0340 protein llmg_0465 from Lactococcus lactis subsp. cremoris (strain MG1363).